The following is a 479-amino-acid chain: tRNA-2-methylthio-N(6)-dimethylallyladenosine synthase (479 aa).

Residues 3–120 (KKLYIKTWGC…LPEMVNQVSE (118 aa)) enclose the MTTase N-terminal domain. The [4Fe-4S] cluster site is built by Cys-12, Cys-49, Cys-83, Cys-157, Cys-161, and Cys-164. In terms of domain architecture, Radical SAM core spans 143–375 (KADGASAFVS…QQRLNQQSMA (233 aa)). The TRAM domain occupies 378-441 (RRMLETEQRI…PNSLRGELIR (64 aa)).

The protein belongs to the methylthiotransferase family. MiaB subfamily. As to quaternary structure, monomer. [4Fe-4S] cluster is required as a cofactor.

Its subcellular location is the cytoplasm. It carries out the reaction N(6)-dimethylallyladenosine(37) in tRNA + (sulfur carrier)-SH + AH2 + 2 S-adenosyl-L-methionine = 2-methylsulfanyl-N(6)-dimethylallyladenosine(37) in tRNA + (sulfur carrier)-H + 5'-deoxyadenosine + L-methionine + A + S-adenosyl-L-homocysteine + 2 H(+). Functionally, catalyzes the methylthiolation of N6-(dimethylallyl)adenosine (i(6)A), leading to the formation of 2-methylthio-N6-(dimethylallyl)adenosine (ms(2)i(6)A) at position 37 in tRNAs that read codons beginning with uridine. In Idiomarina loihiensis (strain ATCC BAA-735 / DSM 15497 / L2-TR), this protein is tRNA-2-methylthio-N(6)-dimethylallyladenosine synthase.